Consider the following 187-residue polypeptide: UPF0398 protein SH1465 (187 aa).

The protein belongs to the UPF0398 family.

The protein is UPF0398 protein SH1465 of Staphylococcus haemolyticus (strain JCSC1435).